A 53-amino-acid chain; its full sequence is Metallocarboxypeptidase inhibitor (53 aa).

3 cysteine pairs are disulfide-bonded: C9-C23, C15-C51, and C27-C38. A53 contacts Zn(2+).

Monomer. Interacts (via C-terminus) with human CPA4.

Metallocarboxypeptidase inhibitor. Has an inhibitory effect on bovine CPA1 and CPB2, human CPA1, CPA2, CPA4, CPB1 and CPB2, and porcine CPB1. Does not inhibit D.melanogaster svr (carboxypeptidase D). Shows no activity against serine proteases subtilisin or bovine trypsin, cysteine protease papain, and aspartyl protease porcine pepsin. This Nerita versicolor (Four-tooth nerite) protein is Metallocarboxypeptidase inhibitor.